Consider the following 99-residue polypeptide: Malonate decarboxylase acyl carrier protein (99 aa).

O-(phosphoribosyl dephospho-coenzyme A)serine is present on S25.

This sequence belongs to the MdcC family. Post-translationally, covalently binds the prosthetic group of malonate decarboxylase.

The protein localises to the cytoplasm. In terms of biological role, subunit of malonate decarboxylase, it is an acyl carrier protein to which acetyl and malonyl thioester residues are bound via a 2'-(5''-phosphoribosyl)-3'-dephospho-CoA prosthetic group and turn over during the catalytic mechanism. The polypeptide is Malonate decarboxylase acyl carrier protein (Pseudomonas putida (strain GB-1)).